We begin with the raw amino-acid sequence, 307 residues long: Serine/threonine-protein phosphatase PP2A-5 catalytic subunit (307 aa).

Mn(2+) contacts are provided by Asp-55, His-57, Asp-83, and Asn-115. His-116 functions as the Proton donor in the catalytic mechanism. His-165 and His-239 together coordinate Mn(2+). At Leu-307 the chain carries Leucine methyl ester.

It belongs to the PPP phosphatase family. PP-2A subfamily. As to quaternary structure, PP2A consists of a common heterodimeric core enzyme, composed of a 36 kDa catalytic subunit (subunit C) and a 65 kDa constant regulatory subunit (subunit A), that associates with a variety of regulatory subunits such as subunits B (the R2/B/PR55/B55, R3/B''/PR72/PR130/PR59 and R5/B'/B56 families). Also interacts with CHIP and TAF12B. Interacts with B'THETA. Interacts with CLC-A, CLC-B, CLC-C and CLC-G. Requires Mn(2+) as cofactor. Post-translationally, reversibly methyl esterified on Leu-307 by leucine carboxyl methyltransferase 1 (LCMT1) and pectin methylesterase 1 (PME1). Carboxyl methylation influences the affinity of the catalytic subunit for the different regulatory subunits, thereby modulating the PP2A holoenzyme's substrate specificity, enzyme activity and cellular localization. Phosphorylation of either threonine (by autophosphorylation-activated protein kinase) or tyrosine results in inactivation of the phosphatase. Auto-dephosphorylation has been suggested as a mechanism for reactivation. In terms of processing, ubiquitinated. CHIP-mediated ubiquitination enhances phosphatase activity after an abiotic stress such as low temperature or darkness.

The protein resides in the cytoplasm. It is found in the cytosol. Its subcellular location is the peroxisome. It catalyses the reaction O-phospho-L-seryl-[protein] + H2O = L-seryl-[protein] + phosphate. The catalysed reaction is O-phospho-L-threonyl-[protein] + H2O = L-threonyl-[protein] + phosphate. Functionally, associates with the serine/threonine-protein phosphatase PP2A regulatory subunits A and B' to positively regulates beta-oxidation of fatty acids and protoauxins in peroxisomes by dephosphorylating peroxisomal beta-oxidation-related proteins. Involved in the positive regulation of salt stress responses. May function by increasing chloride channel activities on vacuolar membranes. The chain is Serine/threonine-protein phosphatase PP2A-5 catalytic subunit from Arabidopsis thaliana (Mouse-ear cress).